Reading from the N-terminus, the 359-residue chain is Phosphate acyltransferase (359 aa).

The tract at residues 338–359 (AGGVQSAPETEAPGAHPSPHVA) is disordered.

Belongs to the PlsX family. In terms of assembly, homodimer. Probably interacts with PlsY.

The protein localises to the cytoplasm. The enzyme catalyses a fatty acyl-[ACP] + phosphate = an acyl phosphate + holo-[ACP]. It functions in the pathway lipid metabolism; phospholipid metabolism. Functionally, catalyzes the reversible formation of acyl-phosphate (acyl-PO(4)) from acyl-[acyl-carrier-protein] (acyl-ACP). This enzyme utilizes acyl-ACP as fatty acyl donor, but not acyl-CoA. The chain is Phosphate acyltransferase from Cupriavidus taiwanensis (strain DSM 17343 / BCRC 17206 / CCUG 44338 / CIP 107171 / LMG 19424 / R1) (Ralstonia taiwanensis (strain LMG 19424)).